A 296-amino-acid polypeptide reads, in one-letter code: Urease accessory protein UreD (296 aa).

It belongs to the UreD family. UreD, UreF and UreG form a complex that acts as a GTP-hydrolysis-dependent molecular chaperone, activating the urease apoprotein by helping to assemble the nickel containing metallocenter of UreC. The UreE protein probably delivers the nickel.

The protein resides in the cytoplasm. In terms of biological role, required for maturation of urease via the functional incorporation of the urease nickel metallocenter. This chain is Urease accessory protein UreD, found in Janthinobacterium sp. (strain Marseille) (Minibacterium massiliensis).